Reading from the N-terminus, the 657-residue chain is Transmembrane protein 232 (657 aa).

Helical transmembrane passes span 168–188 (IGYL…LESF) and 353–373 (WAWN…LYAA).

It localises to the membrane. Functionally, plays a critical role for male fertility and sperm motility by regulating sperm cytoplasm removal and maintaining axoneme integrity. The polypeptide is Transmembrane protein 232 (TMEM232) (Homo sapiens (Human)).